We begin with the raw amino-acid sequence, 282 residues long: tRNA (guanine-N(1)-)-methyltransferase (282 aa).

Residues 77–114 (TGPAATVSDLESSAEHKRNLRPATTNGDAEPLGEKAGG) are disordered. S-adenosyl-L-methionine-binding positions include glycine 149 and 173–178 (IGDYVL).

This sequence belongs to the RNA methyltransferase TrmD family. In terms of assembly, homodimer.

The protein resides in the cytoplasm. It carries out the reaction guanosine(37) in tRNA + S-adenosyl-L-methionine = N(1)-methylguanosine(37) in tRNA + S-adenosyl-L-homocysteine + H(+). Its function is as follows. Specifically methylates guanosine-37 in various tRNAs. The chain is tRNA (guanine-N(1)-)-methyltransferase from Corynebacterium jeikeium (strain K411).